Reading from the N-terminus, the 433-residue chain is Phosphomethylpyrimidine synthase (433 aa).

Residues asparagine 66, methionine 94, tyrosine 123, histidine 162, 184-186 (SRG), 225-228 (DALR), and glutamate 264 each bind substrate. Histidine 268 serves as a coordination point for Zn(2+). Tyrosine 291 serves as a coordination point for substrate. Histidine 332 contributes to the Zn(2+) binding site. Residues cysteine 408, cysteine 411, and cysteine 415 each contribute to the [4Fe-4S] cluster site.

The protein belongs to the ThiC family. [4Fe-4S] cluster serves as cofactor.

It carries out the reaction 5-amino-1-(5-phospho-beta-D-ribosyl)imidazole + S-adenosyl-L-methionine = 4-amino-2-methyl-5-(phosphooxymethyl)pyrimidine + CO + 5'-deoxyadenosine + formate + L-methionine + 3 H(+). It participates in cofactor biosynthesis; thiamine diphosphate biosynthesis. Its function is as follows. Catalyzes the synthesis of the hydroxymethylpyrimidine phosphate (HMP-P) moiety of thiamine from aminoimidazole ribotide (AIR) in a radical S-adenosyl-L-methionine (SAM)-dependent reaction. This Saccharolobus islandicus (strain M.16.27) (Sulfolobus islandicus) protein is Phosphomethylpyrimidine synthase.